The primary structure comprises 426 residues: uncharacterized protein (426 aa).

Positions 23–42 are disordered; the sequence is ENPRPTNNPSTSHPSDSYST. Residues 26–42 show a composition bias toward polar residues; sequence RPTNNPSTSHPSDSYST.

This sequence belongs to the serpin family.

This is an uncharacterized protein from Thermococcus kodakarensis (strain ATCC BAA-918 / JCM 12380 / KOD1) (Pyrococcus kodakaraensis (strain KOD1)).